A 405-amino-acid polypeptide reads, in one-letter code: Arginine deiminase (405 aa).

Cys395 serves as the catalytic Amidino-cysteine intermediate.

Belongs to the arginine deiminase family.

It localises to the cytoplasm. It catalyses the reaction L-arginine + H2O = L-citrulline + NH4(+). Its pathway is amino-acid degradation; L-arginine degradation via ADI pathway; carbamoyl phosphate from L-arginine: step 1/2. This Rhodococcus erythropolis (strain PR4 / NBRC 100887) protein is Arginine deiminase.